The chain runs to 79 residues: Conotoxin 8 (79 aa).

The signal sequence occupies residues 1–22 (MKLTCVLIITVLFLTASQLITA). Positions 23–47 (DYSRGQRQYRAVRLGDEMRNFKGAR) are excised as a propeptide. 3 disulfides stabilise this stretch: Cys-49-Cys-62, Cys-56-Cys-67, and Cys-61-Cys-77.

It belongs to the conotoxin O1 superfamily. As to expression, expressed by the venom duct.

Its subcellular location is the secreted. This Conus vexillum (Flag cone) protein is Conotoxin 8.